A 197-amino-acid chain; its full sequence is Double homeobox protein 5 (197 aa).

2 DNA-binding regions (homeobox) span residues 46-105 (GRRM…LRQH) and 121-180 (GRRK…RGQS). Residues 101–127 (QLRQHRRQSRPWPGRRDPQKGRRKRTA) form a disordered region.

It belongs to the paired homeobox family. In terms of tissue distribution, expressed in hepatoma Hep3B cells.

It localises to the nucleus. This Homo sapiens (Human) protein is Double homeobox protein 5 (DUX5).